The following is a 560-amino-acid chain: Nucleoprotein (560 aa).

Positions 54 to 236 (LRKSKRGDTD…ITKDESALNI (183 aa)) are binding site for the cap structure m7GTP. The Mn(2+) site is built by D380 and E382. Positions 390, 497, 500, and 521 each coordinate Zn(2+). D525 contacts Mn(2+).

The protein belongs to the arenaviridae nucleocapsid protein family. In terms of assembly, homomultimerizes to form the nucleocapsid. Binds to viral genomic RNA. Interacts with glycoprotein G2. Interacts with protein Z; this interaction probably directs the encapsidated genome to budding sites. Interacts with protein L; this interaction does not interfere with Z-L interaction. Interacts with host IKBKE (via Protein kinase domain); the interaction inhibits IKBKE kinase activity.

The protein localises to the virion. It is found in the host cytoplasm. Functionally, encapsidates the genome, protecting it from nucleases. The encapsidated genomic RNA is termed the nucleocapsid (NC). Serves as template for viral transcription and replication. The increased presence of protein N in host cell does not seem to trigger the switch from transcription to replication as observed in other negative strain RNA viruses. Through the interaction with host IKBKE, strongly inhibits the phosphorylation and nuclear translocation of host IRF3, a protein involved in interferon activation pathway, leading to the inhibition of interferon-beta and IRF3-dependent promoters activation. Also encodes a functional 3'-5' exoribonuclease that degrades preferentially dsRNA substrates and thereby participates in the suppression of interferon induction. In Homo sapiens (Human), this protein is Nucleoprotein.